A 95-amino-acid polypeptide reads, in one-letter code: Small ribosomal subunit protein bS18 (95 aa).

This sequence belongs to the bacterial ribosomal protein bS18 family. As to quaternary structure, part of the 30S ribosomal subunit. Forms a tight heterodimer with protein bS6.

Functionally, binds as a heterodimer with protein bS6 to the central domain of the 16S rRNA, where it helps stabilize the platform of the 30S subunit. This is Small ribosomal subunit protein bS18 from Ehrlichia ruminantium (strain Gardel).